A 512-amino-acid polypeptide reads, in one-letter code: uncharacterized protein (512 aa).

A run of 12 helical transmembrane segments spans residues 25–45 (GFYT…VICA), 55–75 (LLYP…PLIL), 96–116 (LVVC…VFLA), 123–143 (VVTG…LPAV), 148–168 (LLLT…LVIV), 183–203 (LLWL…FVGP), 238–258 (MTTY…SLRA), 263–283 (GSLH…SMLW), 294–314 (GLLL…MVAE), 329–349 (FLLA…WISV), 359–379 (LICV…VALG), and 386–406 (ATIW…VASL). The disordered stretch occupies residues 428 to 512 (YRPATPNPIH…APLDAGQRIA (85 aa)).

It is found in the cell membrane. This is an uncharacterized protein from Mycobacterium tuberculosis (strain CDC 1551 / Oshkosh).